The sequence spans 3966 residues: Histone-lysine N-methyltransferase 2A (3966 aa).

Disordered regions lie at residues 1–106 (MAHS…LLRV) and 130–231 (VFGE…GVKI). Positions 6–25 (RWRFPARPGTTGGGGGGGRR) match the Menin-binding motif (MBM) motif. The segment covering 15–29 (TTGGGGGGGRRGLGG) has biased composition (gly residues). The span at 75–102 (GAAAASAASSSSASSSSSSSSSASSGPA) shows a compositional bias: low complexity. Positions 121 to 132 (GTNLRRFRAVFG) match the Integrase domain-binding motif 1 (IBM1) motif. Phosphoserine; by CK2 is present on residues Ser-134 and Ser-140. Residues 145-150 (QFLGFG) carry the Integrase domain-binding motif 2 (IBM2) motif. Position 151 is a phosphoserine (Ser-151). Positions 167-178 (KASPRKPRGRPR) form a DNA-binding region, a.T hook 1. Phosphoserine is present on Ser-195. Residues 200-218 (SETKSADKIKKKDSKSIEK) show a composition bias toward basic and acidic residues. Residues 215–225 (SIEKKRGRPPT) constitute a DNA-binding region (a.T hook 2). Position 237 is an N6-acetyllysine (Lys-237). Positions 299-307 (RRRGRPPST) form a DNA-binding region, a.T hook 3. Positions 322–343 (LEKPQKVRKDKEGTPPLTKEDK) are disordered. Lys-371 carries the post-translational modification N6-acetyllysine. The interval 440–590 (RLESTPNSRF…PWLMPPTIPL (151 aa)) is disordered. Low complexity predominate over residues 450 to 489 (SATSCGSSEKSSAASQHSSQMSSDSSRSSSPSIDTTSDSQ). The residue at position 516 (Ser-516) is a Phosphoserine. The segment covering 544–557 (LPTLQSAPQQQTSS) has biased composition (low complexity). Over residues 558–571 (SPPPPLLTPPPPLQ) the composition is skewed to pro residues. The residue at position 634 (Lys-634) is an N6-acetyllysine. A Phosphoserine modification is found at Ser-678. 4 disordered regions span residues 711–943 (ESVT…ADVA), 963–1003 (RGNL…TSSI), 1034–1064 (IEKS…RGPR), and 1101–1161 (ILSS…CQVP). Low complexity-rich tracts occupy residues 717-730 (SNRT…SGVS) and 760-790 (LSTS…ASAL). 2 stretches are compositionally biased toward polar residues: residues 791–806 (NPTF…QSGE) and 817–830 (QTSA…SNSP). Thr-837 is subject to Phosphothreonine. Positions 843 to 887 (EKGRKKDTAPEELSKDRDADKSVEKDKSRERDREREKENKRESRK) are enriched in basic and acidic residues. Ser-923 carries the phosphoserine modification. The span at 989–1003 (SAPSSSTVKHSTSSI) shows a compositional bias: low complexity. Residues 1040-1059 (LKQTDQPKAQGQESDSSETS) are compositionally biased toward polar residues. A Phosphoserine modification is found at Ser-1053. Residues 1101–1111 (ILSSMGNDDKS) show a composition bias toward basic and acidic residues. Residue Lys-1127 is modified to N6-acetyllysine. Residues 1144–1192 (KKGRRSRRCGQCPGCQVPEDCGICTNCLDKPKFGGRNIKKQCCKMRKCQ) form a CXXC-type zinc finger. Residues Cys-1152, Cys-1155, Cys-1158, Cys-1164, Cys-1167, Cys-1170, Cys-1186, and Cys-1191 each contribute to the Zn(2+) site. The segment at 1196-1390 (WMPSKASLQK…PLSNGISSKQ (195 aa)) is disordered. A compositionally biased stretch (basic and acidic residues) spans 1217–1229 (SKTTEKKESKEST). A compositionally biased stretch (low complexity) spans 1230–1241 (AVKSPLEPAQKA). Lys-1232 is subject to N6-acetyllysine. The segment covering 1245 to 1270 (PREEPAPKKSSSEPPPRKPVEEKSEE) has biased composition (basic and acidic residues). The span at 1369 to 1390 (KQENAGTLNILNPLSNGISSKQ) shows a compositional bias: polar residues. 3 consecutive PHD-type zinc fingers follow at residues 1430–1481 (RVVC…CKFC), 1478–1532 (CKFC…CVRC), and 1565–1629 (GNFC…CTER). An interaction with histone H3K4me3 region spans residues 1583–1599 (KMMQCGKCDRWVHSKCE). The 131-residue stretch at 1637 to 1767 (ALEKELQASL…SFFIRQMERV (131 aa)) folds into the Bromo domain. 2 disordered regions span residues 1665 to 1714 (YRQA…EGVK) and 1807 to 1870 (WQER…PGID). Over residues 1828–1849 (APKPKGPGEPDSPTPLHPPTPP) the composition is skewed to pro residues. Ser-1839 carries the phosphoserine modification. A Phosphothreonine modification is found at Thr-1847. Ser-1860 is modified (phosphoserine). The C2HC pre-PHD-type zinc finger occupies 1872 to 1912 (NRQCALCLMYGDDSANDAGRLLYIGQNEWTHVNCALWSAEV). Residues 1933-1980 (LRCEFCQKPGATVGCCLTSCTSNYHFMCSRAKNCVFLDDKKVYCQRHR) form a PHD-type 4 zinc finger. The 57-residue stretch at 2020–2076 (NIHMMIGSMTIDCLGILNDLSDCEDKLFPIGYQCSRVYWSTTDARKRCVYTCKIMEC) folds into the FYR N-terminal domain. Ser-2100 bears the Phosphoserine mark. The disordered stretch occupies residues 2147–2174 (RTPSYSPTQRSPGCRPLPSAGSPTPTTH). Thr-2148 carries the phosphothreonine modification. Phosphoserine is present on residues Ser-2152 and Ser-2202. 4 disordered regions span residues 2214-2339 (VRTG…ATPG), 2371-2619 (RGQR…SARA), 2639-2673 (EDIP…SDED), and 2709-2759 (KISQ…DAGE). Positions 2218–2230 (SAYSRSSVSSVPS) are enriched in low complexity. Composition is skewed to polar residues over residues 2250–2284 (LSSS…SSPS) and 2308–2320 (TSSS…SAHS). Composition is skewed to basic and acidic residues over residues 2411–2422 (ILHEHIGSSSRD) and 2430–2440 (SSKETCKEKHS). Over residues 2498 to 2509 (GQSTQVEGSSKE) the composition is skewed to polar residues. A Glycyl lysine isopeptide (Lys-Gly) (interchain with G-Cter in SUMO2) cross-link involves residue Lys-2524. A compositionally biased stretch (polar residues) spans 2528–2537 (ENQSKNTQKE). Ser-2560 is modified (phosphoserine). The segment covering 2569-2588 (PSPNNTLSQDPQSNNYQNLP) has biased composition (polar residues). At Ser-2607 the chain carries Phosphoserine. Residues 2609–2618 (KRRYPRRSAR) show a composition bias toward basic residues. Residues 2663–2673 (GADDLSTSDED) show a composition bias toward acidic residues. Polar residues predominate over residues 2722–2737 (SDTSVTATSRKSSQIP). Basic and acidic residues predominate over residues 2740–2759 (NGKENGTENLKIDRPEDAGE). At Ser-2792 the chain carries Phosphoserine. Residues 2843–2851 (SDIMDFVLK) carry the 9aaTAD motif. Ser-2951 is modified (phosphoserine). Residue Lys-2954 is modified to N6-acetyllysine. Disordered regions lie at residues 2958 to 3060 (ITEK…NAAV) and 3164 to 3239 (AAQS…PSNI). Over residues 3012-3025 (HGNSQDLTRNSGTP) the composition is skewed to polar residues. Ser-3032 bears the Phosphoserine mark. A compositionally biased stretch (polar residues) spans 3035 to 3060 (VPVQNQKYVPSSTDSPGPSQISNAAV). Low complexity predominate over residues 3167-3178 (SSFPPNISSPPS). Positions 3196-3212 (EANQRTDLTTTVATPSS) are enriched in polar residues. Basic residues predominate over residues 3214-3229 (LKKRPISRLHTRKNKK). Thr-3369 carries the post-translational modification Phosphothreonine. Lys-3459 is modified (N6-acetyllysine). Residues 3462–3640 (TLTSQRDRDP…AMEEEESGFS (179 aa)) are disordered. Polar residues predominate over residues 3475–3487 (PGTQPSNFTQTAE). Positions 3501 to 3528 (PSAKPASSASPGSSPSSGQQSGSSSVPG) are enriched in low complexity. Phosphoserine occurs at positions 3510 and 3523. Residues 3558–3570 (TSSEAHIPHRDTD) show a composition bias toward basic and acidic residues. Residues 3663-3744 (KKGLVFEISS…KHCRNYKFRF (82 aa)) form the FYR C-terminal domain. The short motif at 3759-3764 (GSARAE) is the WDR5 interaction motif (WIN) element. The segment at 3782-3805 (HRQPPEYNPNDEEEEEVQLKSARR) is disordered. The 117-residue stretch at 3826-3942 (EAVGVYRSPI…RGEELTYDYK (117 aa)) folds into the SET domain. 2 residues coordinate S-adenosyl-L-methionine: His-3836 and Arg-3838. Residue Cys-3879 is modified to S-methylcysteine; by autocatalysis. Residues Tyr-3880 and 3903-3904 (NH) contribute to the S-adenosyl-L-methionine site. Zn(2+) contacts are provided by Cys-3906 and Cys-3954. The Post-SET domain occupies 3950-3966 (NKLPCNCGAKKCRKFLN). Asn-3955 contacts S-adenosyl-L-methionine. 2 residues coordinate Zn(2+): Cys-3956 and Cys-3961.

It belongs to the class V-like SAM-binding methyltransferase superfamily. Histone-lysine methyltransferase family. TRX/MLL subfamily. MLL cleavage product N320 heterodimerizes with MLL cleavage product C180 (via SET and FYRC domains). Component of some MLL1/MLL complex, at least composed of the core components KMT2A/MLL1, ASH2L, HCFC1/HCF1, HCFC2, WDR5, DPY30 and RBBP5, as well as the facultative components BACC1, CHD8, E2F6, HSP70, INO80C, KANSL1, LAS1L, MAX, MCRS1, MEN1, MGA, KAT8/MOF, PELP1, PHF20, PRP31, RING2, RUVB1/TIP49A, RUVB2/TIP49B, SENP3, TAF1, TAF4, TAF6, TAF7, TAF9 and TEX10. Interacts (via WIN motif) with WDR5; the interaction is direct. Interaction with WDR5 is required for stable interaction with ASH2L and RBBP5, and thereby also for optimal histone methyltransferase activity. Interacts with KAT8/MOF; the interaction is direct. Interacts with SBF1 and PPP1R15A. Interacts with ZNF335. Interacts with CLOCK and BMAL1 in a circadian manner. Interacts with PPIE; this results in decreased histone H3 methyltransferase activity. Interacts with CREBBP. Interacts with the WRAD complex composed of WDR5, RBBP5, ASH2L and DPY30. Interacts (via MBM motif) with MEN1. Interacts (via IBM motifs) with PSIP1 (via IBD domain) with moderate affinity whereas the KMT2A-MEN1 complex interacts with a greater affinity; MEN1 enhances interaction of KMT2A with PSIP1. Phosphorylation increases its affinity for PSIP1. Forms a complex with CREBBP and CREB1. Proteolytic cleavage by TASP1 generates MLL cleavage 3product N320 and MLL cleavage product C180, which reassemble through a non-covalent association. 2 cleavage sites exist, cleavage site 1 (CS1) and cleavage site 2 (CS2), to generate MLL cleavage products N320 and C180. CS2 is the major site. Post-translationally, phosphorylation increases its interaction with PSIP1. In terms of processing, auto-methylated at Cys-3879: auto-methylation is inhibited by the WRAD complex and unmodified histone H3.

It is found in the nucleus. It carries out the reaction L-lysyl(4)-[histone H3] + S-adenosyl-L-methionine = N(6)-methyl-L-lysyl(4)-[histone H3] + S-adenosyl-L-homocysteine + H(+). The catalysed reaction is N(6)-methyl-L-lysyl(4)-[histone H3] + S-adenosyl-L-methionine = N(6),N(6)-dimethyl-L-lysyl(4)-[histone H3] + S-adenosyl-L-homocysteine + H(+). It catalyses the reaction L-cysteinyl-[protein] + S-adenosyl-L-methionine = S-methyl-L-cysteinyl-[protein] + S-adenosyl-L-homocysteine + H(+). Functionally, histone methyltransferase that plays an essential role in early development and hematopoiesis. Catalytic subunit of the MLL1/MLL complex, a multiprotein complex that mediates both methylation of 'Lys-4' of histone H3 (H3K4me) complex and acetylation of 'Lys-16' of histone H4 (H4K16ac). Catalyzes methyl group transfer from S-adenosyl-L-methionine to the epsilon-amino group of 'Lys-4' of histone H3 (H3K4) via a non-processive mechanism. Part of chromatin remodeling machinery predominantly forms H3K4me1 and H3K4me2 methylation marks at active chromatin sites where transcription and DNA repair take place. Has weak methyltransferase activity by itself, and requires other component of the MLL1/MLL complex to obtain full methyltransferase activity. Has no activity toward histone H3 phosphorylated on 'Thr-3', less activity toward H3 dimethylated on 'Arg-8' or 'Lys-9', while it has higher activity toward H3 acetylated on 'Lys-9'. Binds to unmethylated CpG elements in the promoter of target genes and helps maintain them in the nonmethylated state. Required for transcriptional activation of HOXA9. Promotes PPP1R15A-induced apoptosis. Plays a critical role in the control of circadian gene expression and is essential for the transcriptional activation mediated by the CLOCK-BMAL1 heterodimer. Establishes a permissive chromatin state for circadian transcription by mediating a rhythmic methylation of 'Lys-4' of histone H3 (H3K4me) and this histone modification directs the circadian acetylation at H3K9 and H3K14 allowing the recruitment of CLOCK-BMAL1 to chromatin. Also has auto-methylation activity on Cys-3879 in absence of histone H3 substrate. The sequence is that of Histone-lysine N-methyltransferase 2A (Kmt2a) from Mus musculus (Mouse).